Consider the following 371-residue polypeptide: Chaperone protein DnaJ (371 aa).

The J domain occupies 5-70; that stretch reads CYYEILNVSK…SKRSRYDQFG (66 aa). Residues 127–204 form a CR-type zinc finger; that stretch reads GVEKEITIPR…CYGNGKVKKQ (78 aa). Zn(2+) is bound by residues Cys140, Cys143, Cys156, Cys159, Cys178, Cys181, Cys192, and Cys195. CXXCXGXG motif repeat units follow at residues 140–147, 156–163, 178–185, and 192–199; these read CDSCDGTG, CHACHGQG, CPVCNGTG, and CDACYGNG.

Belongs to the DnaJ family. Homodimer. Zn(2+) is required as a cofactor.

It localises to the cytoplasm. In terms of biological role, participates actively in the response to hyperosmotic and heat shock by preventing the aggregation of stress-denatured proteins and by disaggregating proteins, also in an autonomous, DnaK-independent fashion. Unfolded proteins bind initially to DnaJ; upon interaction with the DnaJ-bound protein, DnaK hydrolyzes its bound ATP, resulting in the formation of a stable complex. GrpE releases ADP from DnaK; ATP binding to DnaK triggers the release of the substrate protein, thus completing the reaction cycle. Several rounds of ATP-dependent interactions between DnaJ, DnaK and GrpE are required for fully efficient folding. Also involved, together with DnaK and GrpE, in the DNA replication of plasmids through activation of initiation proteins. This is Chaperone protein DnaJ from Francisella tularensis subsp. tularensis (strain WY96-3418).